Consider the following 37-residue polypeptide: Lambda-hexatoxin-Hv1c (37 aa).

Disulfide bonds link Cys-3/Cys-17, Cys-10/Cys-22, Cys-13/Cys-14, and Cys-16/Cys-32.

This sequence belongs to the neurotoxin 11 (kappa toxin) family. As to expression, expressed by the venom gland.

It localises to the secreted. Its function is as follows. This excitatory toxin inhibits insect calcium-activated potassium (KCa) channels (Slo-type). Pan-neuronal expression in Drosophila is lethal but flies engineered to express the toxin only in clock neurons have defects in circadian rhythm but a normal lifespan. The chain is Lambda-hexatoxin-Hv1c from Hadronyche versuta (Blue mountains funnel-web spider).